We begin with the raw amino-acid sequence, 492 residues long: Pyrin and HIN domain-containing protein 1 (492 aa).

The region spanning 1–88 (MANNYKKIVL…AETLKREKLK (88 aa)) is the Pyrin domain. Disordered stretches follow at residues 106–199 (KTKQ…KPLA) and 400–492 (KNTN…PAVP). A compositionally biased stretch (basic and acidic residues) spans 142 to 159 (PSEEETGTKRSKMSKEQT). Residues 160–173 (RPSCSAGASTSTAM) are compositionally biased toward polar residues. A compositionally biased stretch (low complexity) spans 181 to 194 (TSSSAPPNTSSTES). The region spanning 199–399 (ANRHATASKN…SEMHSFIQIQ (201 aa)) is the HIN-200 domain. Polar residues-rich tracts occupy residues 416-432 (QEQS…TTLP) and 460-492 (GAQS…PAVP).

Belongs to the HIN-200 family. In terms of assembly, interacts with MDM2. As to expression, expressed in spleen, lymph node and peripheral blood leukocytes, and at lower levels in thymus, bone marrow and fetal liver. Down-regulated in breast tumors.

It is found in the nucleus. The protein resides in the nucleoplasm. Its subcellular location is the nucleus speckle. Functionally, major mediator of the tumor suppressor activity of IFN in breast cancer cells. Promotes ubiquitination and subsequent degradation of MDM2, which leads to p53/TP53 stabilization. Promotes ubiquitination and subsequent degradation of HDAC1, which in turn enhances maspin expression, and impairs invasive activity of cancer cells. In Homo sapiens (Human), this protein is Pyrin and HIN domain-containing protein 1 (PYHIN1).